A 448-amino-acid polypeptide reads, in one-letter code: Phosphoglucosamine mutase (448 aa).

Residue Ser100 is the Phosphoserine intermediate of the active site. Mg(2+)-binding residues include Ser100, Asp240, Asp242, and Asp244. Ser100 is subject to Phosphoserine.

Belongs to the phosphohexose mutase family. The cofactor is Mg(2+). Activated by phosphorylation.

It catalyses the reaction alpha-D-glucosamine 1-phosphate = D-glucosamine 6-phosphate. Catalyzes the conversion of glucosamine-6-phosphate to glucosamine-1-phosphate. The chain is Phosphoglucosamine mutase from Clostridium acetobutylicum (strain ATCC 824 / DSM 792 / JCM 1419 / IAM 19013 / LMG 5710 / NBRC 13948 / NRRL B-527 / VKM B-1787 / 2291 / W).